A 91-amino-acid polypeptide reads, in one-letter code: Probable Thioredoxin (91 aa).

The 91-residue stretch at 1-91 folds into the Glutaredoxin domain; sequence MVMMKLFTSP…LKGGEEYGAS (91 aa). Residues cysteine 12 and cysteine 15 are joined by a disulfide bond.

This sequence belongs to the glutaredoxin family.

It localises to the cytoplasm. In terms of biological role, acts to maintain redox homeostasis; functions as a protein disulfide reductase. This Archaeoglobus fulgidus (strain ATCC 49558 / DSM 4304 / JCM 9628 / NBRC 100126 / VC-16) protein is Probable Thioredoxin.